Consider the following 194-residue polypeptide: Adenylate kinase (194 aa).

10–15 contributes to the ATP binding site; the sequence is GAGKGT. The NMP stretch occupies residues 30 to 59; the sequence is STGDMLRAAVAAGTPVGLKAKAVMESGGLV. Residues Thr-31, Arg-36, 57–59, 85–88, and Gln-92 each bind AMP; these read GLV and GFPR. The segment at 126–142 is LID; it reads NRAAEAKAKGEPVRKDD. Arg-127 is an ATP binding site. Residues Arg-139 and Arg-150 each contribute to the AMP site. Ala-178 is a binding site for ATP.

Belongs to the adenylate kinase family. In terms of assembly, monomer.

The protein resides in the cytoplasm. It carries out the reaction AMP + ATP = 2 ADP. It participates in purine metabolism; AMP biosynthesis via salvage pathway; AMP from ADP: step 1/1. In terms of biological role, catalyzes the reversible transfer of the terminal phosphate group between ATP and AMP. Plays an important role in cellular energy homeostasis and in adenine nucleotide metabolism. The chain is Adenylate kinase from Azorhizobium caulinodans (strain ATCC 43989 / DSM 5975 / JCM 20966 / LMG 6465 / NBRC 14845 / NCIMB 13405 / ORS 571).